The chain runs to 59 residues: Temporin-CDYd (59 aa).

An N-terminal signal peptide occupies residues 1–22; it reads MFTLKKSMLLLLFLGTISLTLC. A propeptide spanning residues 23-42 is cleaved from the precursor; the sequence is EEERDANEEEENGGEVKEEE.

This sequence belongs to the frog skin active peptide (FSAP) family. Temporin subfamily. Expressed by the skin glands.

The protein localises to the secreted. Its function is as follows. Antimicrobial peptide. The chain is Temporin-CDYd from Rana dybowskii (Dybovsky's frog).